A 147-amino-acid chain; its full sequence is Hemoglobin subunit epsilon (147 aa).

The Globin domain occupies 3–147 (HFTAEEKSTI…VATALAHKYH (145 aa)). A phosphoserine mark is found at S14 and S51. Heme b is bound by residues H64 and H93.

The protein belongs to the globin family. In terms of assembly, heterotetramer of two alpha chains and two epsilon chains in early embryonic hemoglobin Gower-2; two zeta chains and two epsilon chains in early embryonic hemoglobin Gower-1. As to expression, red blood cells.

Functionally, the epsilon chain is a beta-type chain of early mammalian embryonic hemoglobin. The chain is Hemoglobin subunit epsilon (HBE1) from Eulemur fulvus fulvus (Brown lemur).